The chain runs to 224 residues: Ribonuclease T (224 aa).

In terms of domain architecture, Exonuclease spans 20–194 (VVIDVETAGF…YDTERTAELF (175 aa)). Mg(2+)-binding residues include Asp-23, Glu-25, His-181, and Asp-186. Catalysis depends on His-181, which acts as the Proton donor/acceptor.

The protein belongs to the RNase T family. In terms of assembly, homodimer. The cofactor is Mg(2+).

Trims short 3' overhangs of a variety of RNA species, leaving a one or two nucleotide 3' overhang. Responsible for the end-turnover of tRNA: specifically removes the terminal AMP residue from uncharged tRNA (tRNA-C-C-A). Also appears to be involved in tRNA biosynthesis. The sequence is that of Ribonuclease T from Shewanella putrefaciens (strain CN-32 / ATCC BAA-453).